A 302-amino-acid polypeptide reads, in one-letter code: MRHLLDFQGWSRTEVESLLDTARVMREVLERPIKKVPALQGFTVATVFFEPSTRTRISFELAARRMSADVVSFAAQTSSLQKGESYKDTLLTLEAMGVDAYVIRADSAGVPHQATRWVKGAVINGGDGRRAHPTQALLDAYTLLEALGTLEGKKVAIVGDILHSRVARSGAELLSLLGAQVFCAGPPSLLPQSLPGAHLTPRLEEALEEADAVMVLRLQKERMEAGLVHLEDYVARYQVTEKRLALAKPQAPLLHPGPMNRDVELEGTLADSARSLVNRQVQNGVAVRMAVLYHLLVGREKA.

Positions 54 and 55 each coordinate carbamoyl phosphate. Residue K82 participates in L-aspartate binding. Carbamoyl phosphate is bound by residues R104, H132, and Q135. L-aspartate-binding residues include R165 and R217. Residues G257 and P258 each coordinate carbamoyl phosphate.

It belongs to the aspartate/ornithine carbamoyltransferase superfamily. ATCase family. In terms of assembly, heterododecamer (2C3:3R2) of six catalytic PyrB chains organized as two trimers (C3), and six regulatory PyrI chains organized as three dimers (R2).

The enzyme catalyses carbamoyl phosphate + L-aspartate = N-carbamoyl-L-aspartate + phosphate + H(+). Its pathway is pyrimidine metabolism; UMP biosynthesis via de novo pathway; (S)-dihydroorotate from bicarbonate: step 2/3. Functionally, catalyzes the condensation of carbamoyl phosphate and aspartate to form carbamoyl aspartate and inorganic phosphate, the committed step in the de novo pyrimidine nucleotide biosynthesis pathway. In Thermus thermophilus (strain ATCC BAA-163 / DSM 7039 / HB27), this protein is Aspartate carbamoyltransferase catalytic subunit.